The chain runs to 138 residues: FUN14 domain-containing protein fndc-1 (138 aa).

2 consecutive transmembrane segments (helical) span residues 37–56 (PMVQ…YFVT) and 61–78 (LVAA…FAIH). N85 and N111 each carry an N-linked (GlcNAc...) asparagine glycan.

Belongs to the FUN14 family. In terms of tissue distribution, broadly expressed in somatic tissues. Expressed in the hermaphrodite spermatheca and male gonad. Expressed in spermatids, but not expressed in oocytes.

It is found in the mitochondrion outer membrane. Functionally, mitophagy receptor which plays a role in paternal mitochondria degradation in embryos after the two-cell stage. This chain is FUN14 domain-containing protein fndc-1, found in Caenorhabditis elegans.